Here is a 343-residue protein sequence, read N- to C-terminus: Serine/threonine-protein kinase SRK2C (343 aa).

The 257-residue stretch at 4 to 260 (YEIVKDIGSG…IEEIKNHSWF (257 aa)) folds into the Protein kinase domain. ATP-binding positions include 10-18 (IGSGNFGVA) and Lys-33. Asp-123 serves as the catalytic Proton acceptor. Thr-158 carries the phosphothreonine modification.

The protein belongs to the protein kinase superfamily. Ser/Thr protein kinase family. In terms of assembly, interacts with I-2 and TOPP1. In terms of tissue distribution, expressed in seedlings.

It catalyses the reaction L-seryl-[protein] + ATP = O-phospho-L-seryl-[protein] + ADP + H(+). The enzyme catalyses L-threonyl-[protein] + ATP = O-phospho-L-threonyl-[protein] + ADP + H(+). Its function is as follows. Involved in gene regulation and confers tolerance to drought and osmotic stress. The polypeptide is Serine/threonine-protein kinase SRK2C (SRK2C) (Arabidopsis thaliana (Mouse-ear cress)).